A 666-amino-acid polypeptide reads, in one-letter code: Probable potassium transport system protein Kup (666 aa).

12 consecutive transmembrane segments (helical) span residues 16–36, 58–78, 100–120, 141–161, 165–185, 221–241, 253–273, 294–314, 343–363, 373–393, 399–419, and 424–444; these read GFII…LYTM, ISLI…LIAL, PWLI…GALT, IYQN…VLFG, FGTG…FSFL, IFIL…YSDL, WPFV…WILA, VYLV…LISG, LYIP…VLAF, YGLA…YYLI, PILA…FFLA, and FMHG…VMFI.

This sequence belongs to the HAK/KUP transporter (TC 2.A.72) family.

The protein localises to the cell membrane. The enzyme catalyses K(+)(in) + H(+)(in) = K(+)(out) + H(+)(out). Functionally, transport of potassium into the cell. Likely operates as a K(+):H(+) symporter. This chain is Probable potassium transport system protein Kup, found in Streptococcus pyogenes serotype M4 (strain MGAS10750).